The chain runs to 389 residues: Type III polyketide synthase 21 (389 aa).

Residue cysteine 170 is the Nucleophile of the active site.

This sequence belongs to the thiolase-like superfamily. Chalcone/stilbene synthases family. Expressed in anthers. Expressed in young and adult flowers.

In terms of biological role, plant type III polyketide synthases (PKSs) that catalyzes the condensation of fatty acyl-CoA with malonyl-CoA to generate triketide and tetraketide alpha-pyrones, the main components of pollen exine and potential sporopollenin precursors. In Oryza sativa subsp. japonica (Rice), this protein is Type III polyketide synthase 21 (PKS21).